A 149-amino-acid chain; its full sequence is Protein SprT-like (149 aa).

Positions 5 to 143 (DYVKQVSLED…CGLCRGKLLL (139 aa)) constitute a SprT-like domain. Residue His64 coordinates Zn(2+). Glu65 is an active-site residue. His68 provides a ligand contact to Zn(2+).

It belongs to the SprT family. The cofactor is Zn(2+).

It is found in the cytoplasm. This Streptococcus pneumoniae (strain Hungary19A-6) protein is Protein SprT-like.